A 363-amino-acid chain; its full sequence is Small ribosomal subunit biogenesis GTPase RsgA (363 aa).

The region spanning 112 to 268 is the CP-type G domain; the sequence is HQQVIAANID…LIDTPGMREL (157 aa). GTP-binding positions include 157–160 and 210–218; these read TKAD and GSSGAGKST. Residues Cys291, Cys296, His298, and Cys304 each contribute to the Zn(2+) site. The segment at 340-363 is disordered; the sequence is RVAQNNRGKGSGKRPASVDRPGRH.

It belongs to the TRAFAC class YlqF/YawG GTPase family. RsgA subfamily. Monomer. Associates with 30S ribosomal subunit, binds 16S rRNA. Zn(2+) is required as a cofactor.

The protein resides in the cytoplasm. In terms of biological role, one of several proteins that assist in the late maturation steps of the functional core of the 30S ribosomal subunit. Helps release RbfA from mature subunits. May play a role in the assembly of ribosomal proteins into the subunit. Circularly permuted GTPase that catalyzes slow GTP hydrolysis, GTPase activity is stimulated by the 30S ribosomal subunit. The sequence is that of Small ribosomal subunit biogenesis GTPase RsgA from Xanthomonas axonopodis pv. citri (strain 306).